The sequence spans 416 residues: Phosphatidylinositol 5-phosphate 4-kinase type-2 beta (416 aa).

S2 is subject to N-acetylserine. T8 carries the phosphothreonine modification. S19 is subject to Phosphoserine. Positions 38–415 (ASEPILSVLM…RFNEFMSNIL (378 aa)) constitute a PIPK domain. A required for interaction with PIP5K1A region spans residues 64-70 (VMLMPDD). N6-acetyllysine occurs at positions 94 and 150. Residues 202-204 (RNV) and K214 contribute to the ATP site. Residues 203-204 (NV) and K214 each bind GTP. T322 is subject to Phosphothreonine. S326 bears the Phosphoserine mark. D369 contributes to the GTP binding site.

Homodimer. Binds TNFRSF1A. Interacts with PIP4K2A; the interaction suppresses ubiquitination by the SPOP/CUL3 complex. Probably interacts with PIP5K1A; the interaction inhibits PIP5K1A kinase activity. Post-translationally, ubiquitinated by the SPOP/CUL3 complex. Ubiquitination is stimulated by PtdIns5P levels. Phosphorylated on serine residues.

It is found in the endoplasmic reticulum membrane. The protein resides in the cell membrane. It localises to the nucleus. Its subcellular location is the cytoplasm. It catalyses the reaction a 1,2-diacyl-sn-glycero-3-phospho-(1D-myo-inositol-5-phosphate) + ATP = a 1,2-diacyl-sn-glycero-3-phospho-(1D-myo-inositol-4,5-bisphosphate) + ADP + H(+). The enzyme catalyses 1,2-dihexadecanoyl-sn-glycero-3-phospho-(1D-myo-inositol-5-phosphate) + ATP = 1,2-dihexadecanoyl-sn-glycero-3-phospho-(1D-myo-inositol-4,5-bisphosphate) + ADP + H(+). It carries out the reaction 1,2-dihexadecanoyl-sn-glycero-3-phospho-(1D-myo-inositol-5-phosphate) + GTP = 1,2-dihexadecanoyl-sn-glycero-3-phospho-(1D-myo-inositol-4,5-bisphosphate) + GDP + H(+). In terms of biological role, participates in the biosynthesis of phosphatidylinositol 4,5-bisphosphate. Preferentially utilizes GTP, rather than ATP, for PI(5)P phosphorylation and its activity reflects changes in direct proportion to the physiological GTP concentration. Its GTP-sensing activity is critical for metabolic adaptation. PIP4Ks negatively regulate insulin signaling through a catalytic-independent mechanism. They interact with PIP5Ks and suppress PIP5K-mediated PtdIns(4,5)P2 synthesis and insulin-dependent conversion to PtdIns(3,4,5)P3. This is Phosphatidylinositol 5-phosphate 4-kinase type-2 beta from Rattus norvegicus (Rat).